Consider the following 295-residue polypeptide: Fatty acid desaturase 4-like 1, chloroplastic (295 aa).

A chloroplast-targeting transit peptide spans methionine 1–threonine 29. 3 helical membrane passes run tryptophan 72–phenylalanine 92, leucine 102–isoleucine 122, and leucine 175–leucine 195.

It belongs to the fatty acid desaturase CarF family.

Its subcellular location is the plastid. The protein resides in the chloroplast membrane. It functions in the pathway lipid metabolism; fatty acid metabolism. Functionally, fatty acid desaturase involved in the production of chloroplast-specific phosphatidylglycerol molecular species. Catalyzes the formation of a trans double bond introduced close to the carboxyl group of palmitic acid, which is specifically esterified to the sn-2 glyceryl carbon of phosphatidylglycerol. The sequence is that of Fatty acid desaturase 4-like 1, chloroplastic (FAD4L1) from Arabidopsis thaliana (Mouse-ear cress).